We begin with the raw amino-acid sequence, 40 residues long: Protein P4 (40 aa).

Residues 10 to 29 (KYFAYGVAISAAGAILAEYV) traverse the membrane as a helical segment.

It is found in the virion membrane. May interact with the viral DNA. This chain is Protein P4 (IV), found in Pseudoalteromonas phage PM2 (Bacteriophage PM2).